A 154-amino-acid polypeptide reads, in one-letter code: Protein MGF 300-2R (154 aa).

The protein belongs to the asfivirus MGF 300 family.

In terms of biological role, plays a role in virus cell tropism, and may be required for efficient virus replication in macrophages. The protein is Protein MGF 300-2R of Ornithodoros (relapsing fever ticks).